The following is a 254-amino-acid chain: Leucyl/phenylalanyl-tRNA--protein transferase (254 aa).

Pro residues predominate over residues 1–10 (MSSQPPPLPW). The interval 1–28 (MSSQPPPLPWLDPNQDFPPTSQAWDENS) is disordered.

Belongs to the L/F-transferase family.

Its subcellular location is the cytoplasm. The enzyme catalyses N-terminal L-lysyl-[protein] + L-leucyl-tRNA(Leu) = N-terminal L-leucyl-L-lysyl-[protein] + tRNA(Leu) + H(+). The catalysed reaction is N-terminal L-arginyl-[protein] + L-leucyl-tRNA(Leu) = N-terminal L-leucyl-L-arginyl-[protein] + tRNA(Leu) + H(+). It catalyses the reaction L-phenylalanyl-tRNA(Phe) + an N-terminal L-alpha-aminoacyl-[protein] = an N-terminal L-phenylalanyl-L-alpha-aminoacyl-[protein] + tRNA(Phe). In terms of biological role, functions in the N-end rule pathway of protein degradation where it conjugates Leu, Phe and, less efficiently, Met from aminoacyl-tRNAs to the N-termini of proteins containing an N-terminal arginine or lysine. This is Leucyl/phenylalanyl-tRNA--protein transferase from Albidiferax ferrireducens (strain ATCC BAA-621 / DSM 15236 / T118) (Rhodoferax ferrireducens).